Reading from the N-terminus, the 89-residue chain is Small ribosomal subunit protein bS20 (89 aa).

The segment at 1–26 is disordered; that stretch reads MANSAQARKRARQADGQRSHNASLRS.

The protein belongs to the bacterial ribosomal protein bS20 family.

Functionally, binds directly to 16S ribosomal RNA. This Dechloromonas aromatica (strain RCB) protein is Small ribosomal subunit protein bS20.